Reading from the N-terminus, the 226-residue chain is Urease accessory protein UreF (226 aa).

This sequence belongs to the UreF family. As to quaternary structure, ureD, UreF and UreG form a complex that acts as a GTP-hydrolysis-dependent molecular chaperone, activating the urease apoprotein by helping to assemble the nickel containing metallocenter of UreC. The UreE protein probably delivers the nickel.

Its subcellular location is the cytoplasm. Functionally, required for maturation of urease via the functional incorporation of the urease nickel metallocenter. In Burkholderia lata (strain ATCC 17760 / DSM 23089 / LMG 22485 / NCIMB 9086 / R18194 / 383), this protein is Urease accessory protein UreF.